The primary structure comprises 211 residues: Thymidylate kinase (211 aa).

10–17 (GPDGAGKT) is an ATP binding site.

The protein belongs to the thymidylate kinase family.

The enzyme catalyses dTMP + ATP = dTDP + ADP. In terms of biological role, phosphorylation of dTMP to form dTDP in both de novo and salvage pathways of dTTP synthesis. The polypeptide is Thymidylate kinase (tmk) (Lactococcus lactis subsp. lactis (strain IL1403) (Streptococcus lactis)).